Here is a 466-residue protein sequence, read N- to C-terminus: Asparagine--tRNA ligase (466 aa).

Belongs to the class-II aminoacyl-tRNA synthetase family. Homodimer.

It localises to the cytoplasm. It catalyses the reaction tRNA(Asn) + L-asparagine + ATP = L-asparaginyl-tRNA(Asn) + AMP + diphosphate + H(+). The protein is Asparagine--tRNA ligase of Sodalis glossinidius (strain morsitans).